Reading from the N-terminus, the 332-residue chain is Methionyl-tRNA formyltransferase (332 aa).

124-127 (SLLP) provides a ligand contact to (6S)-5,6,7,8-tetrahydrofolate.

The protein belongs to the Fmt family.

It carries out the reaction L-methionyl-tRNA(fMet) + (6R)-10-formyltetrahydrofolate = N-formyl-L-methionyl-tRNA(fMet) + (6S)-5,6,7,8-tetrahydrofolate + H(+). Its function is as follows. Attaches a formyl group to the free amino group of methionyl-tRNA(fMet). The formyl group appears to play a dual role in the initiator identity of N-formylmethionyl-tRNA by promoting its recognition by IF2 and preventing the misappropriation of this tRNA by the elongation apparatus. The sequence is that of Methionyl-tRNA formyltransferase from Polynucleobacter necessarius subsp. necessarius (strain STIR1).